Consider the following 231-residue polypeptide: Eukaryotic translation initiation factor 4E allele A (231 aa).

Positions 1-20 (MAAAEMERTTSFDAAEKLKA) are enriched in basic and acidic residues. Residues 1–36 (MAAAEMERTTSFDAAEKLKAADAGGGEVDDELEEGE) form a disordered region. The span at 27–36 (EVDDELEEGE) shows a compositional bias: acidic residues. EIF4G-binding regions lie at residues 56–59 (HPLE) and 66–102 (FDSPIAKSRQTAWGSSLRNVYTFSTVEDFWGAYNNIH). MRNA-binding positions include 74-79 (RQTAWG), K106, and 124-125 (WE). A disulfide bridge connects residues C129 and C167. The tract at residues 150–159 (YTLLAMIGHQ) is EIF4G-binding. MRNA-binding positions include 174–179 (RSKGEK) and 219–223 (KRLDR).

This sequence belongs to the eukaryotic initiation factor 4E family. EIF4F is a multi-subunit complex, the composition of which varies with external and internal environmental conditions. It is composed of at least EIF4A, EIF4E and EIF4G. EIF4E is also known to interact with other partners. In higher plants two isoforms of EIF4F have been identified, named isoform EIF4F and isoform EIF(iso)4F. Isoform EIF4F has subunits p220 and p26, whereas isoform EIF(iso)4F has subunits p82 and p28. In terms of assembly, (Microbial infection) Interacts with viral genome-linked protein (VPg); this interaction is possible in susceptible hosts but impaired in resistant plants. Post-translationally, according to the redox status, the Cys-129-Cys-167 disulfide bridge may have a role in regulating protein function by affecting its ability to bind capped mRNA.

The protein resides in the nucleus. The protein localises to the cytoplasm. In terms of biological role, component of the protein complex eIF4F, which is involved in the recognition of the mRNA cap, ATP-dependent unwinding of 5'-terminal secondary structure and recruitment of mRNA to the ribosome. Recognizes and binds the 7-methylguanosine-containing mRNA cap during an early step in the initiation of protein synthesis and facilitates ribosome binding by inducing the unwinding of the mRNAs secondary structures. Key component of recessive resistance to potyviruses. (Microbial infection) Susceptibility host factor required for viral infection (e.g. Potato virus Y (PVY)) by recruiting viral RNAs to the host ribosomal complex via an interaction with viral genome-linked protein (VPg). This Solanum tuberosum (Potato) protein is Eukaryotic translation initiation factor 4E allele A.